The chain runs to 106 residues: Small ribosomal subunit protein bS18 (106 aa).

The interval 1–41 (MAEEHSNQRSQTFNGERTNRPSRKPRGDGERRGRRQGGRRR) is disordered.

This sequence belongs to the bacterial ribosomal protein bS18 family. In terms of assembly, part of the 30S ribosomal subunit. Forms a tight heterodimer with protein bS6.

Binds as a heterodimer with protein bS6 to the central domain of the 16S rRNA, where it helps stabilize the platform of the 30S subunit. The polypeptide is Small ribosomal subunit protein bS18 (Oenococcus oeni (strain ATCC BAA-331 / PSU-1)).